The following is a 91-amino-acid chain: Small ribosomal subunit protein uS19 (91 aa).

The protein belongs to the universal ribosomal protein uS19 family.

Functionally, protein S19 forms a complex with S13 that binds strongly to the 16S ribosomal RNA. This is Small ribosomal subunit protein uS19 from Bordetella pertussis (strain Tohama I / ATCC BAA-589 / NCTC 13251).